An 811-amino-acid chain; its full sequence is TLR4 interactor with leucine rich repeats (811 aa).

Residues 1 to 25 form the signal peptide; it reads MEGVGAVRFWLVVCGCLAFPPRAES. One can recognise an LRRNT domain in the interval 26-57; the sequence is VCPERCDCQHPQHLLCTNRGLRAVPKTSSLPS. Over 26-696 the chain is Extracellular; that stretch reads VCPERCDCQH…AGGRGGVDYQ (671 aa). 12 LRR repeats span residues 61-81, 84-105, 108-129, 132-153, 156-177, 180-201, 204-223, 230-251, 254-275, 278-298, 302-323, and 326-347; these read VLTY…DFHR, QLRR…TFEK, RLEE…TLAP, KLRI…SFEG, SLVK…VFAP, NLLY…AFTQ, KLRF…RHAA, SLST…VFQH, RLGL…AFWG, ALRE…TLLE, SLEA…TFGH, and RLRE…IFAA. N73 carries N-linked (GlcNAc...) asparagine glycosylation. In terms of domain architecture, LRRCT spans 359-416; sequence NGWTCDCRLRGLKRWMGNWHSQGRLLTVFVQCRHPPALRGKYLDYLDDQLLQNGSCVD. N411 carries N-linked (GlcNAc...) asparagine glycosylation. Disordered stretches follow at residues 414 to 460 and 486 to 562; these read CVDP…QQRG and RRGP…QQGR. A compositionally biased stretch (polar residues) spans 421–430; it reads PTAGSRQWPI. 2 stretches are compositionally biased toward low complexity: residues 440–460 and 494–508; these read PPAG…QQRG and QSPS…APQS. A compositionally biased stretch (basic and acidic residues) spans 510–519; sequence DLHEKPERGR. Positions 524-545 are enriched in polar residues; the sequence is NLPQTEPTPTSEPASGTPSARD. An N-linked (GlcNAc...) asparagine glycan is attached at N589. Residues 697–717 traverse the membrane as a helical segment; that stretch reads LLTLVLLAINALLVLLALAAW. Residues 718–809 lie on the Cytoplasmic side of the membrane; it reads GSRWLRRKLR…RREDHLLQRF (92 aa). S798 is modified (phosphoserine).

In terms of assembly, belongs to the lipopolysaccharide (LPS) receptor, a multi-protein complex containing at least CD14, MD-2 and TLR4. Interacts with TLR4; this interaction is greatly enhanced following LPS stimulation. Interacts with LPS. In terms of processing, N-glycolysaled. In terms of tissue distribution, highly expressed in cortical astrocytes and in cerebellar granule neurons.

It localises to the membrane. Component of the TLR4 signaling complex. Mediates the innate immune response to bacterial lipopolysaccharide (LPS) leading to cytokine secretion and the inflammatory response. The sequence is that of TLR4 interactor with leucine rich repeats (Tril) from Rattus norvegicus (Rat).